The primary structure comprises 64 residues: Large ribosomal subunit protein bL28 (64 aa).

Residues 1 to 27 (MAKRDQLTGKGPLSGNTRSHAMNHSKR) are disordered.

Belongs to the bacterial ribosomal protein bL28 family.

The polypeptide is Large ribosomal subunit protein bL28 (Ureaplasma parvum serovar 3 (strain ATCC 27815 / 27 / NCTC 11736)).